An 871-amino-acid chain; its full sequence is Coatomer subunit gamma-2 (871 aa).

Positions 1–11 are enriched in basic and acidic residues; the sequence is MIKKFDKKDEE. The segment at 1 to 21 is disordered; sequence MIKKFDKKDEESGSGSNPFQH. 6 HEAT repeats span residues 64-101, 283-320, 321-355, 356-392, 395-430, and 467-504; these read TEAT…ISED, RELA…KHPS, AVTA…GSES, SVDR…KYPR, SVMM…ENPE, and PVPS…QNES. Thr594 is modified (phosphothreonine).

This sequence belongs to the COPG family. Oligomeric complex. Binds to CDC42. Interacts with JAGN1. Interacts with TMED10 (via cytoplasmic domain).

The protein localises to the cytoplasm. It localises to the cytosol. It is found in the golgi apparatus membrane. Its subcellular location is the cytoplasmic vesicle. The protein resides in the COPI-coated vesicle membrane. In terms of biological role, the coatomer is a cytosolic protein complex that binds to dilysine motifs and reversibly associates with Golgi non-clathrin-coated vesicles, which further mediate biosynthetic protein transport from the ER, via the Golgi up to the trans Golgi network. Coatomer complex is required for budding from Golgi membranes, and is essential for the retrograde Golgi-to-ER transport of dilysine-tagged proteins. In mammals, the coatomer can only be recruited by membranes associated to ADP-ribosylation factors (ARFs), which are small GTP-binding proteins; the complex also influences the Golgi structural integrity, as well as the processing, activity, and endocytic recycling of LDL receptors. The polypeptide is Coatomer subunit gamma-2 (COPG2) (Homo sapiens (Human)).